The primary structure comprises 600 residues: Elongation factor 4 (600 aa).

The 183-residue stretch at 4–186 (SKIRNFSIIA…AIVDKIPPPS (183 aa)) folds into the tr-type G domain. GTP contacts are provided by residues 16 to 21 (DHGKST) and 133 to 136 (NKID).

This sequence belongs to the TRAFAC class translation factor GTPase superfamily. Classic translation factor GTPase family. LepA subfamily.

The protein localises to the cell membrane. It catalyses the reaction GTP + H2O = GDP + phosphate + H(+). In terms of biological role, required for accurate and efficient protein synthesis under certain stress conditions. May act as a fidelity factor of the translation reaction, by catalyzing a one-codon backward translocation of tRNAs on improperly translocated ribosomes. Back-translocation proceeds from a post-translocation (POST) complex to a pre-translocation (PRE) complex, thus giving elongation factor G a second chance to translocate the tRNAs correctly. Binds to ribosomes in a GTP-dependent manner. The polypeptide is Elongation factor 4 (Mycoplasma capricolum subsp. capricolum (strain California kid / ATCC 27343 / NCTC 10154)).